A 152-amino-acid polypeptide reads, in one-letter code: Superoxide dismutase [Cu-Zn] 1 (152 aa).

Cu cation is bound by residues His-45, His-47, and His-62. A disulfide bridge connects residues Cys-56 and Cys-145. His-62, His-70, His-79, and Asp-82 together coordinate Zn(2+). His-119 lines the Cu cation pocket.

Belongs to the Cu-Zn superoxide dismutase family. Homodimer. Cu cation is required as a cofactor. Requires Zn(2+) as cofactor.

Its subcellular location is the cytoplasm. It catalyses the reaction 2 superoxide + 2 H(+) = H2O2 + O2. In terms of biological role, destroys radicals which are normally produced within the cells and which are toxic to biological systems. This chain is Superoxide dismutase [Cu-Zn] 1 (SODCC.1), found in Solanum lycopersicum (Tomato).